Consider the following 265-residue polypeptide: Undecaprenyl-diphosphatase (265 aa).

A run of 7 helical transmembrane segments spans residues 42-62, 82-102, 108-128, 143-163, 181-201, 221-241, and 248-264; these read AATF…VLYW, GIML…AAHS, LFTP…MLLV, MSPA…WPGF, GLAA…ATGY, GFVV…ALVG, and FAWY…YFMA.

It belongs to the UppP family.

The protein resides in the cell inner membrane. It catalyses the reaction di-trans,octa-cis-undecaprenyl diphosphate + H2O = di-trans,octa-cis-undecaprenyl phosphate + phosphate + H(+). Catalyzes the dephosphorylation of undecaprenyl diphosphate (UPP). Confers resistance to bacitracin. This is Undecaprenyl-diphosphatase from Nitratidesulfovibrio vulgaris (strain DP4) (Desulfovibrio vulgaris).